The following is a 247-amino-acid chain: Transmembrane protein 33 (247 aa).

At Ala2 the chain carries N-acetylalanine. Residues Ala2–Arg31 lie on the Lumenal side of the membrane. Residues Leu32–Ala52 traverse the membrane as a helical segment. The Cytoplasmic portion of the chain corresponds to Ser53–Leu100. A helical membrane pass occupies residues Ile101–Leu121. The Lumenal portion of the chain corresponds to His122–Asn155. Residues Ile156–Phe176 form a helical membrane-spanning segment. At Ser177–Ala247 the chain is on the cytoplasmic side.

Belongs to the PER33/POM33 family. In terms of assembly, interacts with EIF2AK3. Interacts with ARL6IP1, isoform RTN1-A of RTN1, isoform RTN2-B of RTN2, isoform 3 of RTN3 and isoform 3 of RTN4. Interacts with RNF5. Interacts with RNF26. Interacts with PKD2. As to expression, highly expressed in the liver and significantly in brain, lungs and kidneys.

It localises to the endoplasmic reticulum membrane. The protein resides in the melanosome. It is found in the nucleus envelope. Its function is as follows. Acts as a regulator of the tubular endoplasmic reticulum (ER) network by modulating intracellular calcium homeostasis. Mechanistically, stimulates PKD2 calcium-dependent activity. Suppresses the RTN3/4-induced formation of the ER tubules. Positively regulates PERK-mediated and IRE1-mediated unfolded protein response signaling. Plays an essential role in VEGF-mediated release of Ca(2+) from ER stores during angiogenesis. Also plays a role in the modulation of innate immune signaling through the cGAS-STING pathway by interacting with RNF26. Participates in lipid metabolism by acting as a downstream effector of the pyruvate kinase/PKM. Forms a complex with RNF5 to facilitate polyubiquitination and subsequent degradation of SCAP on the ER membrane. The chain is Transmembrane protein 33 (Tmem33) from Rattus norvegicus (Rat).